The primary structure comprises 700 residues: Chaperonin CPN60, mitochondrial (700 aa).

The N-terminal 9 residues, 1-9 (MRMKRIHIL), are a transit peptide targeting the mitochondrion. The segment at 636 to 700 (TYKHKLHDDE…SMNDEYNYDE (65 aa)) is disordered. Residues 644-700 (DEDTDEDDEEDEDDEDDEDDLDDDDYDDEDEEDEEDEEDEDDEDDEDSMNDEYNYDE) show a composition bias toward acidic residues.

Belongs to the chaperonin (HSP60) family.

It is found in the mitochondrion matrix. Implicated in mitochondrial protein import and macromolecular assembly. May facilitate the correct folding of imported proteins. May also prevent misfolding and promote the refolding and proper assembly of unfolded polypeptides generated under stress conditions in the mitochondrial matrix. The polypeptide is Chaperonin CPN60, mitochondrial (Plasmodium falciparum (isolate FCR-3 / Gambia)).